Reading from the N-terminus, the 189-residue chain is Phosphoheptose isomerase (189 aa).

In terms of domain architecture, SIS spans 34-189 (LVEAFRKGNK…CDLVEKALFA (156 aa)). 49–51 (NGG) contributes to the substrate binding site. 2 residues coordinate Zn(2+): His58 and Glu62. Substrate-binding positions include Glu62, 91–92 (ND), 117–119 (STS), Ser122, and Gln169. The Zn(2+) site is built by Gln169 and His177.

It belongs to the SIS family. GmhA subfamily. Homotetramer. Requires Zn(2+) as cofactor.

The protein localises to the cytoplasm. The enzyme catalyses 2 D-sedoheptulose 7-phosphate = D-glycero-alpha-D-manno-heptose 7-phosphate + D-glycero-beta-D-manno-heptose 7-phosphate. It functions in the pathway carbohydrate biosynthesis; D-glycero-D-manno-heptose 7-phosphate biosynthesis; D-glycero-alpha-D-manno-heptose 7-phosphate and D-glycero-beta-D-manno-heptose 7-phosphate from sedoheptulose 7-phosphate: step 1/1. Functionally, catalyzes the isomerization of sedoheptulose 7-phosphate in D-glycero-D-manno-heptose 7-phosphate. This is Phosphoheptose isomerase from Pelobacter propionicus (strain DSM 2379 / NBRC 103807 / OttBd1).